A 194-amino-acid polypeptide reads, in one-letter code: 3-isopropylmalate dehydratase small subunit (194 aa).

Belongs to the LeuD family. LeuD type 1 subfamily. Heterodimer of LeuC and LeuD.

The catalysed reaction is (2R,3S)-3-isopropylmalate = (2S)-2-isopropylmalate. The protein operates within amino-acid biosynthesis; L-leucine biosynthesis; L-leucine from 3-methyl-2-oxobutanoate: step 2/4. Its function is as follows. Catalyzes the isomerization between 2-isopropylmalate and 3-isopropylmalate, via the formation of 2-isopropylmaleate. The protein is 3-isopropylmalate dehydratase small subunit of Limosilactobacillus fermentum (strain NBRC 3956 / LMG 18251) (Lactobacillus fermentum).